The chain runs to 463 residues: L-seryl-tRNA(Sec) selenium transferase (463 aa).

Lys-295 carries the N6-(pyridoxal phosphate)lysine modification.

This sequence belongs to the SelA family. As to quaternary structure, homodecamer; pentamer of dimers. Binds only one seryl-tRNA(Sec) per dimer. Pyridoxal 5'-phosphate is required as a cofactor.

It is found in the cytoplasm. It catalyses the reaction L-seryl-tRNA(Sec) + selenophosphate + H(+) = L-selenocysteinyl-tRNA(Sec) + phosphate. Its pathway is aminoacyl-tRNA biosynthesis; selenocysteinyl-tRNA(Sec) biosynthesis; selenocysteinyl-tRNA(Sec) from L-seryl-tRNA(Sec) (bacterial route): step 1/1. In terms of biological role, converts seryl-tRNA(Sec) to selenocysteinyl-tRNA(Sec) required for selenoprotein biosynthesis. The sequence is that of L-seryl-tRNA(Sec) selenium transferase from Shigella sonnei (strain Ss046).